The following is a 295-amino-acid chain: SPX domain-containing protein 1 (295 aa).

The region spanning 1-166 (MKFGKSLSSQ…GALIRLPFIQ (166 aa)) is the SPX domain. The tract at residues 197 to 227 (NELPVSSEDGRGDSTNEDKPSNPSSSLVNGG) is disordered. Residues 204–216 (EDGRGDSTNEDKP) are compositionally biased toward basic and acidic residues.

As to quaternary structure, interacts (via SPX domain) with PHR2 (via C-terminus). Interacts with RLI1 in the nucleus to prevents its positive regulation of leaf inclination during phosphate (Pi) starvation.

It is found in the nucleus. In terms of biological role, involved in plant adaptation to phosphate (Pi) starvation. Inhibits PHR2 DNA-binding activity via a Pi-dependent protein interaction. Suppresses the regulation on expression of PT2 by PHR2 and accumulation of shoot Pi. Optimizes growth under phosphate-limited conditions through a negative feedback loop of the PSI (phosphate starvation-induced) signaling pathway. Regulates the expression of SPX2, SPX3 and SPX5. May be an important link between signal transduction pathways related to phosphate starvation and cold stress. Together with SPX2, plays a negative role in the regulation of leaf inclination by preventing RLI1 transcription factor activity in Pi depleted conditions. In Oryza sativa subsp. indica (Rice), this protein is SPX domain-containing protein 1.